We begin with the raw amino-acid sequence, 74 residues long: Chitinases 70, 30, and 20.5 kDa (74 aa).

Positions 1–27 are N-terminus of 70 kDa chitinase; that stretch reads XTSATATYAKTQDWGSCFEGKWTIKNT. Positions 28–52 are N-terminus of 30 kDa chitinase; sequence AACSSYPSWVAGRSYAAGDIVYYTD. The interval 53–74 is N-terminus of 20.5 kDa chitinase; it reads XGYTDLPVSRQKMCQNGMVTNC.

Belongs to the glycosyl hydrolase 18 family. Chitinase class II subfamily. As to quaternary structure, homodimer, but homotrimers and homotetramers could be observed for the 20.5 and 30 kDa chitinases. The 70 kDa chitinase is probably the precursor protein of the 30 and 20.5 kDa chitinases.

The catalysed reaction is Random endo-hydrolysis of N-acetyl-beta-D-glucosaminide (1-&gt;4)-beta-linkages in chitin and chitodextrins.. Its function is as follows. Able to cleave chitin oligomers from N=3 to 6. The chain is Chitinases 70, 30, and 20.5 kDa from Streptomyces olivaceoviridis (Streptomyces corchorusii).